We begin with the raw amino-acid sequence, 466 residues long: Cysteine--tRNA ligase (466 aa).

Cys29 provides a ligand contact to Zn(2+). The 'HIGH' region signature appears at 31-41 (ATVQAPPHIGH). Zn(2+)-binding residues include Cys211, His236, and Glu240. Positions 267–271 (KMSKS) match the 'KMSKS' region motif. Lys270 is a binding site for ATP.

Belongs to the class-I aminoacyl-tRNA synthetase family. As to quaternary structure, monomer. Zn(2+) serves as cofactor.

It localises to the cytoplasm. It catalyses the reaction tRNA(Cys) + L-cysteine + ATP = L-cysteinyl-tRNA(Cys) + AMP + diphosphate. This Thermobifida fusca (strain YX) protein is Cysteine--tRNA ligase.